Consider the following 130-residue polypeptide: Early 3 receptor internalization and degradation beta protein (130 aa).

The signal sequence occupies residues 1-19 (MKRSVIFVLLIFCALPVLC). Residues 53–77 (AWLYAIISVMVFCSTIFALAIYPYL) traverse the membrane as a helical segment. The tract at residues 122–125 (YFNL) is tyrosine-based sorting motif.

The protein belongs to the adenoviridae E3_RID-beta family. In terms of assembly, interacts with E3 RID-alpha and E3 CR1-alpha. In terms of processing, phosphorylated on serine. Post-translationally, O-glycosylated, but not N-glycosylated.

Its subcellular location is the host membrane. Functionally, prevents infected cell apoptosis induced by the host immune system. Acts by down-regulating a number of cell surface receptors in the tumor necrosis factor (TNF) receptor superfamily, namely FAS, TNFRSF10A/TRAIL receptor 1, and TNFRSF10B/TRAIL receptor 2. Down-regulation of these death receptors protects adenovirus-infected cells from apoptosis induced by the death receptor ligands Fas ligand and TRAIL. RID complex also down-regulates certain tyrosine kinase cell surface receptors, especially the epidermal growth factor receptor (EGFR). RID-mediated Fas and EGFR down-regulation occurs via endocytosis of the receptors into endosomes followed by transport to and degradation within lysosomes. In Human adenovirus C serotype 2 (HAdV-2), this protein is Early 3 receptor internalization and degradation beta protein.